The sequence spans 412 residues: Serine hydroxymethyltransferase (412 aa).

Residues L117 and 121–123 (GHL) each bind (6S)-5,6,7,8-tetrahydrofolate. K226 bears the N6-(pyridoxal phosphate)lysine mark.

This sequence belongs to the SHMT family. In terms of assembly, homodimer. The cofactor is pyridoxal 5'-phosphate.

Its subcellular location is the cytoplasm. The catalysed reaction is (6R)-5,10-methylene-5,6,7,8-tetrahydrofolate + glycine + H2O = (6S)-5,6,7,8-tetrahydrofolate + L-serine. The protein operates within one-carbon metabolism; tetrahydrofolate interconversion. It participates in amino-acid biosynthesis; glycine biosynthesis; glycine from L-serine: step 1/1. Catalyzes the reversible interconversion of serine and glycine with tetrahydrofolate (THF) serving as the one-carbon carrier. This reaction serves as the major source of one-carbon groups required for the biosynthesis of purines, thymidylate, methionine, and other important biomolecules. Also exhibits THF-independent aldolase activity toward beta-hydroxyamino acids, producing glycine and aldehydes, via a retro-aldol mechanism. This is Serine hydroxymethyltransferase from Natranaerobius thermophilus (strain ATCC BAA-1301 / DSM 18059 / JW/NM-WN-LF).